The chain runs to 185 residues: dCTP deaminase (185 aa).

Residue 107–112 (KSTYAR) participates in dCTP binding. Catalysis depends on glutamate 133, which acts as the Proton donor/acceptor. Residues glutamine 152, tyrosine 166, and glutamine 176 each contribute to the dCTP site.

The protein belongs to the dCTP deaminase family. Homotrimer.

The enzyme catalyses dCTP + H2O + H(+) = dUTP + NH4(+). The protein operates within pyrimidine metabolism; dUMP biosynthesis; dUMP from dCTP (dUTP route): step 1/2. Catalyzes the deamination of dCTP to dUTP. The polypeptide is dCTP deaminase (Nitratiruptor sp. (strain SB155-2)).